The sequence spans 236 residues: 7-cyano-7-deazaguanine synthase (236 aa).

Residue 12–22 (FSGGQDSTTCL) coordinates ATP. Zn(2+)-binding residues include Cys-200, Cys-215, Cys-218, and Cys-221.

It belongs to the QueC family. Requires Zn(2+) as cofactor.

It carries out the reaction 7-carboxy-7-deazaguanine + NH4(+) + ATP = 7-cyano-7-deazaguanine + ADP + phosphate + H2O + H(+). The protein operates within purine metabolism; 7-cyano-7-deazaguanine biosynthesis. Catalyzes the ATP-dependent conversion of 7-carboxy-7-deazaguanine (CDG) to 7-cyano-7-deazaguanine (preQ(0)). This Bradyrhizobium sp. (strain ORS 278) protein is 7-cyano-7-deazaguanine synthase.